The chain runs to 121 residues: MKSFVFALALIVAFACISESKSDHTGYEEEENLEDSELTDLVAAALLEELAEASEMDDLSYTEEAGGERMDKLEEMALKLKDKLKTMAEKGAQMGEKLKEMLPKAMEKLKELMEKMKNKMG.

The N-terminal stretch at 1–22 (MKSFVFALALIVAFACISESKS) is a signal peptide. A propeptide spanning residues 23–69 (DHTGYEEEENLEDSELTDLVAAALLEELAEASEMDDLSYTEEAGGER) is cleaved from the precursor. At Met120 the chain carries Methionine amide.

Expressed by the venom gland.

The protein localises to the secreted. In terms of biological role, shows no antimicrobial activity against Gram-positive bacterium B.subtilis B-501 or Gram-negative bacterium E.coli DH5-alpha at concentrations up to 20 ug/ml. Shows no toxicity towards insect (S.carnaria) larvae. This chain is Met-lysine-1b, found in Lachesana tarabaevi (Spider).